A 192-amino-acid polypeptide reads, in one-letter code: Ion-translocating oxidoreductase complex subunit A (192 aa).

6 consecutive transmembrane segments (helical) span residues 5 to 25 (ALIL…FLGL), 39 to 59 (TGMG…SYLV), 65 to 85 (APLG…AAVV), 102 to 122 (VLGI…VALL), 134 to 154 (ALYG…FASI), and 171 to 191 (AIAL…IGLV).

Belongs to the NqrDE/RnfAE family. In terms of assembly, the complex is composed of six subunits: RnfA, RnfB, RnfC, RnfD, RnfE and RnfG.

It localises to the cell inner membrane. Functionally, part of a membrane-bound complex that couples electron transfer with translocation of ions across the membrane. This chain is Ion-translocating oxidoreductase complex subunit A, found in Thioalkalivibrio sulfidiphilus (strain HL-EbGR7).